A 159-amino-acid chain; its full sequence is Phosphopantetheine adenylyltransferase (159 aa).

A substrate-binding site is contributed by Ser-9. ATP is bound by residues 9–10 (SF) and His-17. Positions 41, 73, and 87 each coordinate substrate. ATP is bound by residues 88–90 (GLR), Glu-98, and 123–129 (YSYLSSS).

The protein belongs to the bacterial CoaD family. Homohexamer. It depends on Mg(2+) as a cofactor.

The protein localises to the cytoplasm. It catalyses the reaction (R)-4'-phosphopantetheine + ATP + H(+) = 3'-dephospho-CoA + diphosphate. It participates in cofactor biosynthesis; coenzyme A biosynthesis; CoA from (R)-pantothenate: step 4/5. In terms of biological role, reversibly transfers an adenylyl group from ATP to 4'-phosphopantetheine, yielding dephospho-CoA (dPCoA) and pyrophosphate. This chain is Phosphopantetheine adenylyltransferase, found in Clostridium botulinum (strain Alaska E43 / Type E3).